The following is a 341-amino-acid chain: Uroporphyrinogen decarboxylase (341 aa).

Substrate is bound by residues 23 to 27 (RQAGR), Asp73, Tyr147, Ser202, and His318.

The protein belongs to the uroporphyrinogen decarboxylase family. In terms of assembly, homodimer.

The protein resides in the cytoplasm. It carries out the reaction uroporphyrinogen III + 4 H(+) = coproporphyrinogen III + 4 CO2. It functions in the pathway porphyrin-containing compound metabolism; protoporphyrin-IX biosynthesis; coproporphyrinogen-III from 5-aminolevulinate: step 4/4. In terms of biological role, catalyzes the decarboxylation of four acetate groups of uroporphyrinogen-III to yield coproporphyrinogen-III. This Erythrobacter litoralis (strain HTCC2594) protein is Uroporphyrinogen decarboxylase.